A 339-amino-acid polypeptide reads, in one-letter code: Anthranilate phosphoribosyltransferase (339 aa).

Residues Gly-79, 82–83 (GD), Ser-87, 89–92 (NIST), 107–115 (KHGNRAASS), and Ala-119 each bind 5-phospho-alpha-D-ribose 1-diphosphate. Gly-79 contacts anthranilate. Ser-91 is a binding site for Mg(2+). Asn-110 contacts anthranilate. Arg-165 is a binding site for anthranilate. Residues Asp-224 and Glu-225 each contribute to the Mg(2+) site.

The protein belongs to the anthranilate phosphoribosyltransferase family. Homodimer. Mg(2+) is required as a cofactor.

It carries out the reaction N-(5-phospho-beta-D-ribosyl)anthranilate + diphosphate = 5-phospho-alpha-D-ribose 1-diphosphate + anthranilate. It functions in the pathway amino-acid biosynthesis; L-tryptophan biosynthesis; L-tryptophan from chorismate: step 2/5. Catalyzes the transfer of the phosphoribosyl group of 5-phosphorylribose-1-pyrophosphate (PRPP) to anthranilate to yield N-(5'-phosphoribosyl)-anthranilate (PRA). The polypeptide is Anthranilate phosphoribosyltransferase (Lactiplantibacillus plantarum (strain ATCC BAA-793 / NCIMB 8826 / WCFS1) (Lactobacillus plantarum)).